The chain runs to 267 residues: Ras-related protein Rab-36 (267 aa).

8 residues coordinate GTP: Val68, Gly69, Lys70, Thr71, Ser72, Asp83, Tyr86, and Thr89. Thr71 lines the Mg(2+) pocket. The short motif at 76–94 is the Switch 1 element; it reads RFCKNVFDRDYKATIGVDF. Positions 89 and 112 each coordinate Mg(2+). Positions 113–132 match the Switch 2 motif; that stretch reads TAGQEKFKCIASAYYRGAQV. 6 residues coordinate GTP: Gly115, Lys172, Asp174, Ser203, Ala204, and Lys205. The segment at 243 to 267 is disordered; that stretch reads GDLIQMEGSPPETQESKRPSSLGCC. Residues Cys266 and Cys267 are each lipidated (S-geranylgeranyl cysteine).

This sequence belongs to the small GTPase superfamily. Rab family. Requires Mg(2+) as cofactor. Ubiquitously present in all tissues examined.

It is found in the golgi apparatus membrane. It catalyses the reaction GTP + H2O = GDP + phosphate + H(+). Its activity is regulated as follows. Regulated by guanine nucleotide exchange factors (GEFs) which promote the exchange of bound GDP for free GTP. Regulated by GTPase activating proteins (GAPs) which increase the GTP hydrolysis activity. Inhibited by GDP dissociation inhibitors (GDIs). The small GTPases Rab are key regulators of intracellular membrane trafficking, from the formation of transport vesicles to their fusion with membranes. Rabs cycle between an inactive GDP-bound form and an active GTP-bound form that is able to recruit to membranes different sets of downstream effectors directly responsible for vesicle formation, movement, tethering and fusion. In Homo sapiens (Human), this protein is Ras-related protein Rab-36.